The primary structure comprises 222 residues: MAGKPKLHYTRGRGKMESIRWLLAAAGVEFEEEFIEKKEDLEKLRNDGSLLFQQVPMVEIDGMKMVQSRAILCYIAGKYNLYGKDLKERAWIDMYVEGTTDLMGMIMALPFQAADVKEKNIALITERATTRYFPVYEKALKDHGQDYLVGNKLSWADIHLLEAILMTEELKSDILSAFPLLQAFKGRMSNVPTIKKFLQPGSQRKPPLDEKSIANVRKIFSF.

The GST N-terminal domain maps to 3–83 (GKPKLHYTRG…YIAGKYNLYG (81 aa)). Glutathione is bound by residues tyrosine 9, arginine 45, 54 to 55 (QV), and 67 to 68 (QS). One can recognise a GST C-terminal domain in the interval 85–208 (DLKERAWIDM…QPGSQRKPPL (124 aa)).

Belongs to the GST superfamily. Alpha family. Homodimer.

Its subcellular location is the cytoplasm. The enzyme catalyses RX + glutathione = an S-substituted glutathione + a halide anion + H(+). In terms of biological role, conjugation of reduced glutathione to a wide number of exogenous and endogenous hydrophobic electrophiles. The sequence is that of Glutathione S-transferase from Gallus gallus (Chicken).